A 206-amino-acid polypeptide reads, in one-letter code: dITP/XTP pyrophosphatase (206 aa).

Residue serine 7–lysine 12 participates in substrate binding. Catalysis depends on aspartate 70, which acts as the Proton acceptor. Aspartate 70 provides a ligand contact to Mg(2+). Residues threonine 71, phenylalanine 154–aspartate 157, lysine 177, and histidine 182–arginine 183 contribute to the substrate site.

This sequence belongs to the HAM1 NTPase family. Homodimer. Requires Mg(2+) as cofactor.

It catalyses the reaction XTP + H2O = XMP + diphosphate + H(+). It carries out the reaction dITP + H2O = dIMP + diphosphate + H(+). The catalysed reaction is ITP + H2O = IMP + diphosphate + H(+). Its function is as follows. Pyrophosphatase that catalyzes the hydrolysis of nucleoside triphosphates to their monophosphate derivatives, with a high preference for the non-canonical purine nucleotides XTP (xanthosine triphosphate), dITP (deoxyinosine triphosphate) and ITP. Seems to function as a house-cleaning enzyme that removes non-canonical purine nucleotides from the nucleotide pool, thus preventing their incorporation into DNA/RNA and avoiding chromosomal lesions. This chain is dITP/XTP pyrophosphatase, found in Chlamydia caviae (strain ATCC VR-813 / DSM 19441 / 03DC25 / GPIC) (Chlamydophila caviae).